Reading from the N-terminus, the 292-residue chain is ATP synthase gamma chain (292 aa).

It belongs to the ATPase gamma chain family. In terms of assembly, F-type ATPases have 2 components, CF(1) - the catalytic core - and CF(0) - the membrane proton channel. CF(1) has five subunits: alpha(3), beta(3), gamma(1), delta(1), epsilon(1). CF(0) has three main subunits: a, b and c.

It is found in the cell inner membrane. Its function is as follows. Produces ATP from ADP in the presence of a proton gradient across the membrane. The gamma chain is believed to be important in regulating ATPase activity and the flow of protons through the CF(0) complex. This chain is ATP synthase gamma chain, found in Nautilia profundicola (strain ATCC BAA-1463 / DSM 18972 / AmH).